The following is a 594-amino-acid chain: DNA mismatch repair protein MutL (594 aa).

The protein belongs to the DNA mismatch repair MutL/HexB family.

In terms of biological role, this protein is involved in the repair of mismatches in DNA. It is required for dam-dependent methyl-directed DNA mismatch repair. May act as a 'molecular matchmaker', a protein that promotes the formation of a stable complex between two or more DNA-binding proteins in an ATP-dependent manner without itself being part of a final effector complex. The protein is DNA mismatch repair protein MutL of Tolumonas auensis (strain DSM 9187 / NBRC 110442 / TA 4).